The primary structure comprises 490 residues: Alginate production protein AlgE (490 aa).

The signal sequence occupies residues 1–32 (MNSSRSVNPRPSFAPRALSLAIALLLGAPAFA). Polar residues-rich tracts occupy residues 102 to 115 (DTLQSDTDDGNNSR) and 343 to 355 (QFQQTGLESNRSN). Disordered stretches follow at residues 102-121 (DTLQSDTDDGNNSRNDGREP) and 331-355 (ARGSGGGKDGEEQFQQTGLESNRSN).

The protein belongs to the AlgE family.

Its subcellular location is the cell outer membrane. It functions in the pathway glycan biosynthesis; alginate biosynthesis. Has non-porin-like, channel-forming properties and probably functions as an alginate permeability pore. The sequence is that of Alginate production protein AlgE (algE) from Pseudomonas aeruginosa (strain ATCC 15692 / DSM 22644 / CIP 104116 / JCM 14847 / LMG 12228 / 1C / PRS 101 / PAO1).